Consider the following 326-residue polypeptide: Ankyrin repeat domain-containing protein 9 (326 aa).

The tract at residues 1–20 is disordered; sequence MPWDTRPGRSANGGPEGPGA. The ANK 1 repeat unit spans residues 70-99; it reads SPSEALLYALVHDHQAYAHYLLATFPRCAL. Residues 108 to 109 carry the Important role in both nutrient sensing and binding/regulation of IMPDH2 motif; that stretch reads CC. 2 ANK repeats span residues 111–140 and 157–186; these read APGPHVALAVRYNRVGILRRILRTVQDFPV and GGGTSLHVACELARPECLFLLLGHGASPGL.

Part of an E3 ubiquitin-protein ligase complex with Elongin BC (ELOB and ELOC), CUL5 and ANKRD9. Interacts with IMPDH2; leading to ubiquitination of IMPDH2 and its subsequent proteasomal degradation.

The protein resides in the cytoplasmic vesicle. It localises to the cytoplasm. Its subcellular location is the cytosol. It participates in protein modification; protein ubiquitination. Its function is as follows. Substrate receptor subunit of a cullin-RING superfamily E3 ligase complex (CUL5-based E3 ubiquitin ligase complex) which mediates the ubiquitination and subsequent proteasomal degradation of target proteins. Depending of the metabolic state of the cell, promotes the proteasomal degradation of IMPDH2, the rate-limiting enzyme in GTP biosynthesis or protects IMPDH2 by stabilizing IMPDH2 filaments assembly. Implicated in different cellular processes, like copper homeostasis and cell proliferation. This chain is Ankyrin repeat domain-containing protein 9 (Ankrd9), found in Mus musculus (Mouse).